The following is a 202-amino-acid chain: Imidazoleglycerol-phosphate dehydratase (202 aa).

This sequence belongs to the imidazoleglycerol-phosphate dehydratase family.

Its subcellular location is the cytoplasm. It carries out the reaction D-erythro-1-(imidazol-4-yl)glycerol 3-phosphate = 3-(imidazol-4-yl)-2-oxopropyl phosphate + H2O. It participates in amino-acid biosynthesis; L-histidine biosynthesis; L-histidine from 5-phospho-alpha-D-ribose 1-diphosphate: step 6/9. This is Imidazoleglycerol-phosphate dehydratase from Clavibacter michiganensis subsp. michiganensis (strain NCPPB 382).